We begin with the raw amino-acid sequence, 560 residues long: MGICSSSCCGGKSRDALYENVLAENEREAVADLLQYLENRAETDFFSGEPLRALSTLVYSDNIDLQRSASLTFAEITERDVRAVDRDTLGPILFLLENSDIEVQRAASAALGNLAVNTDNKVLIVQLGGLQPLIKQMMSPNVEVQCNAVGCITNLATHEENKAKIARSGALGPLTRLAKSKDMRVQRNATGALLNMTHSDENRQQLVNAGAIPVLVQLLSSSDVDVQYYCTTALSNIAVDANNRRKLAETEQRLVQYLVNLTESSSPKVQCQAALALRNLASDEKYQLEIVQAHGLGPLLRLLRSSYLPLILSAVACIRNISIHPQNESPIIEAGFLKPLVDLLGSTDNEEIQCHAISTLRNLAASSDRNKSLVLEAGAVQKCKQLVLEVPVTVQSEMTAAIAVLALSDELKTHLLELGVFDVLIPLTMSPSVEVQGNSAAALGNLSSKVGDYSIFVQNWMEPRDGIHGYLNRFLASGDATFQHIAIWTLLQLLESEDKKLIGLIGKSDGVVDMIKQIANRQMMESDNEAEDDDEGEVVNLAQRCLELLGQGGSKSHIEG.

G2 is lipidated: N-myristoyl glycine. A lipid anchor (S-palmitoyl cysteine) is attached at C4. 9 ARM repeats span residues 39–76, 77–116, 118–157, 159–198, 200–239, 243–282, 284–323, 325–365, and 409–448; these read NRAE…FAEI, TERD…NLAV, TDNK…NLAT, EENK…NMTH, DENR…NIAV, NRRK…NLAS, EKYQ…NISI, PQNE…NLAA, and DELK…NLSS.

This sequence belongs to the beta-catenin family.

The protein localises to the vacuole membrane. In terms of biological role, functions in both vacuole inheritance and protein targeting from the cytoplasm to vacuole. This chain is Vacuolar protein 8 (VAC8), found in Chaetomium globosum (strain ATCC 6205 / CBS 148.51 / DSM 1962 / NBRC 6347 / NRRL 1970) (Soil fungus).